We begin with the raw amino-acid sequence, 142 residues long: Hemoglobin subunit alpha 1 (142 aa).

The residue at position 1 (Ser-1) is an N-acetylserine. The Globin domain occupies 1–142 (SLSDKDKAAV…VSLALSERYR (142 aa)). His-59 lines the O2 pocket. His-88 provides a ligand contact to heme b.

The protein belongs to the globin family. In terms of assembly, hb1 is a heterotetramer of two alpha-1 chains and two beta-1 chains. Hb2 is a heterotetramer of two alpha-2 chains and two beta-1 chains. HbC is a heterotetramer of two alpha-1 chains and two beta-2 chains. In terms of tissue distribution, red blood cells.

Functionally, involved in oxygen transport from gills to the various peripheral tissues. In Eleginops maclovinus (Patagonian blennie), this protein is Hemoglobin subunit alpha 1.